Consider the following 202-residue polypeptide: Polyamine-modulated factor 1 (202 aa).

Residues methionine 1–proline 15 show a composition bias toward basic and acidic residues. The tract at residues methionine 1–aspartate 26 is disordered. The stretch at glutamate 153–leucine 194 forms a coiled coil.

Component of the MIS12 complex composed of MIS12, DSN1, NSL1 and PMF1. Interacts with COPS7A. Interacts via its coiled-coil domain with the leucine-zipper domain of NFE2L2. The interaction with NFE2L2 is required for the transcriptional regulation of SSAT.

It is found in the nucleus. It localises to the chromosome. The protein localises to the centromere. The protein resides in the kinetochore. Functionally, part of the MIS12 complex which is required for normal chromosome alignment and segregation and for kinetochore formation during mitosis. May act as a cotranscription partner of NFE2L2 involved in regulation of polyamine-induced transcription of SSAT. The polypeptide is Polyamine-modulated factor 1 (Mus musculus (Mouse)).